Here is a 475-residue protein sequence, read N- to C-terminus: Aspartyl/glutamyl-tRNA(Asn/Gln) amidotransferase subunit B (475 aa).

It belongs to the GatB/GatE family. GatB subfamily. In terms of assembly, heterotrimer of A, B and C subunits.

The enzyme catalyses L-glutamyl-tRNA(Gln) + L-glutamine + ATP + H2O = L-glutaminyl-tRNA(Gln) + L-glutamate + ADP + phosphate + H(+). The catalysed reaction is L-aspartyl-tRNA(Asn) + L-glutamine + ATP + H2O = L-asparaginyl-tRNA(Asn) + L-glutamate + ADP + phosphate + 2 H(+). Its function is as follows. Allows the formation of correctly charged Asn-tRNA(Asn) or Gln-tRNA(Gln) through the transamidation of misacylated Asp-tRNA(Asn) or Glu-tRNA(Gln) in organisms which lack either or both of asparaginyl-tRNA or glutaminyl-tRNA synthetases. The reaction takes place in the presence of glutamine and ATP through an activated phospho-Asp-tRNA(Asn) or phospho-Glu-tRNA(Gln). In Mycoplasma mobile (strain ATCC 43663 / 163K / NCTC 11711) (Mesomycoplasma mobile), this protein is Aspartyl/glutamyl-tRNA(Asn/Gln) amidotransferase subunit B.